A 264-amino-acid chain; its full sequence is Thymidylate synthase (264 aa).

Arg21 contributes to the dUMP binding site. His51 lines the (6R)-5,10-methylene-5,6,7,8-tetrahydrofolate pocket. 126–127 (RR) contacts dUMP. Cys146 (nucleophile) is an active-site residue. Residues 166 to 169 (RSAD), Asn177, and 207 to 209 (HIY) each bind dUMP. Residue Asp169 participates in (6R)-5,10-methylene-5,6,7,8-tetrahydrofolate binding. A (6R)-5,10-methylene-5,6,7,8-tetrahydrofolate-binding site is contributed by Ser263.

It belongs to the thymidylate synthase family. Bacterial-type ThyA subfamily. As to quaternary structure, homodimer.

The protein resides in the cytoplasm. The enzyme catalyses dUMP + (6R)-5,10-methylene-5,6,7,8-tetrahydrofolate = 7,8-dihydrofolate + dTMP. Its pathway is pyrimidine metabolism; dTTP biosynthesis. Catalyzes the reductive methylation of 2'-deoxyuridine-5'-monophosphate (dUMP) to 2'-deoxythymidine-5'-monophosphate (dTMP) while utilizing 5,10-methylenetetrahydrofolate (mTHF) as the methyl donor and reductant in the reaction, yielding dihydrofolate (DHF) as a by-product. This enzymatic reaction provides an intracellular de novo source of dTMP, an essential precursor for DNA biosynthesis. The protein is Thymidylate synthase of Halalkalibacterium halodurans (strain ATCC BAA-125 / DSM 18197 / FERM 7344 / JCM 9153 / C-125) (Bacillus halodurans).